The sequence spans 295 residues: Putative 23S rRNA (guanine-N(1)-)-methyltransferase (295 aa).

Residues C11, C14, C31, and H35 each coordinate Zn(2+). S-adenosyl-L-methionine is bound by residues Y74, 116–117, and H204; that span reads TG.

Belongs to the methyltransferase superfamily. RlmA family.

Functionally, confers strong resistance to mycinamicin (MM) and tylosin (TY). May function as methyltransferase. The polypeptide is Putative 23S rRNA (guanine-N(1)-)-methyltransferase (myrA) (Micromonospora griseorubida).